A 693-amino-acid polypeptide reads, in one-letter code: Elongation factor G (693 aa).

One can recognise a tr-type G domain in the interval 8-282; sequence EKTRNIGIMA…AVIDYLPSPL (275 aa). GTP contacts are provided by residues 17–24, 81–85, and 135–138; these read AHVDAGKT, DTPGH, and NKMD.

Belongs to the TRAFAC class translation factor GTPase superfamily. Classic translation factor GTPase family. EF-G/EF-2 subfamily.

The protein resides in the cytoplasm. Functionally, catalyzes the GTP-dependent ribosomal translocation step during translation elongation. During this step, the ribosome changes from the pre-translocational (PRE) to the post-translocational (POST) state as the newly formed A-site-bound peptidyl-tRNA and P-site-bound deacylated tRNA move to the P and E sites, respectively. Catalyzes the coordinated movement of the two tRNA molecules, the mRNA and conformational changes in the ribosome. In Streptococcus pneumoniae (strain P1031), this protein is Elongation factor G.